Consider the following 302-residue polypeptide: Porphobilinogen deaminase (302 aa).

Position 234 is an S-(dipyrrolylmethanemethyl)cysteine (cysteine 234).

The protein belongs to the HMBS family. Monomer. The cofactor is dipyrromethane.

The enzyme catalyses 4 porphobilinogen + H2O = hydroxymethylbilane + 4 NH4(+). It functions in the pathway porphyrin-containing compound metabolism; protoporphyrin-IX biosynthesis; coproporphyrinogen-III from 5-aminolevulinate: step 2/4. Tetrapolymerization of the monopyrrole PBG into the hydroxymethylbilane pre-uroporphyrinogen in several discrete steps. The sequence is that of Porphobilinogen deaminase from Corynebacterium glutamicum (strain R).